Reading from the N-terminus, the 278-residue chain is MIEKKILLTDCPDDKGLIAKITNICYKHQLNILHNNEFVDFETKHFFMRTELEGIFNEATLLEDLKYSLPEETNCRLIGTQRKRIVILVTKEAHCLGDILMKNYYGALDVEIAAVIGNHDNLRELVERFNIPFHLVSHENLTRVEHDKLLAEKIDEYTPDYIVLAKYMRVLNPEFVARYPNRVINIHHSFLPAFIGAKPYQQAYKRGVKIIGATAHFINNELDQGPIIMQNVINVDHTYNAEAMMRAGRDVEKTVLSRALDLALHDRIFVYKNKTVVL.

Residues 6-85 enclose the ACT domain; sequence ILLTDCPDDK…RLIGTQRKRI (80 aa). The active site involves aspartate 223.

Belongs to the PurU family.

It carries out the reaction (6R)-10-formyltetrahydrofolate + H2O = (6S)-5,6,7,8-tetrahydrofolate + formate + H(+). The protein operates within purine metabolism; IMP biosynthesis via de novo pathway; formate from 10-formyl-5,6,7,8-tetrahydrofolate: step 1/1. Functionally, catalyzes the hydrolysis of 10-formyltetrahydrofolate (formyl-FH4) to formate and tetrahydrofolate (FH4). The chain is Formyltetrahydrofolate deformylase from Haemophilus influenzae (strain ATCC 51907 / DSM 11121 / KW20 / Rd).